Here is a 260-residue protein sequence, read N- to C-terminus: Small ribosomal subunit protein cS22 (260 aa).

The N-terminal 62 residues, 1-62 (MATISSILPC…TNPPLLKVRA (62 aa)), are a transit peptide targeting the chloroplast. Over residues 63 to 78 (VVTEETSSSSTASSSS) the composition is skewed to low complexity. The disordered stretch occupies residues 63–83 (VVTEETSSSSTASSSSDGEGA). RRM domains follow at residues 84–162 (RRLY…ITEK) and 184–260 (YKVY…VNKA).

In terms of assembly, component of the chloroplast small ribosomal subunit (SSU). Mature 70S chloroplast ribosomes of higher plants consist of a small (30S) and a large (50S) subunit. The 30S small subunit contains 1 molecule of ribosomal RNA (16S rRNA) and 24 different proteins. The 50S large subunit contains 3 rRNA molecules (23S, 5S and 4.5S rRNA) and 33 different proteins.

The protein resides in the plastid. Its subcellular location is the chloroplast. In terms of biological role, component of the chloroplast ribosome (chloro-ribosome), a dedicated translation machinery responsible for the synthesis of chloroplast genome-encoded proteins, including proteins of the transcription and translation machinery and components of the photosynthetic apparatus. cS22 may have a role in the recruitment of stored chloroplast mRNAs for active protein synthesis. This is Small ribosomal subunit protein cS22 (PSRP2) from Spinacia oleracea (Spinach).